The sequence spans 521 residues: Bifunctional purine biosynthesis protein PurH (521 aa).

The 145-residue stretch at methionine 1 to cysteine 145 folds into the MGS-like domain.

It belongs to the PurH family.

It catalyses the reaction (6R)-10-formyltetrahydrofolate + 5-amino-1-(5-phospho-beta-D-ribosyl)imidazole-4-carboxamide = 5-formamido-1-(5-phospho-D-ribosyl)imidazole-4-carboxamide + (6S)-5,6,7,8-tetrahydrofolate. The enzyme catalyses IMP + H2O = 5-formamido-1-(5-phospho-D-ribosyl)imidazole-4-carboxamide. Its pathway is purine metabolism; IMP biosynthesis via de novo pathway; 5-formamido-1-(5-phospho-D-ribosyl)imidazole-4-carboxamide from 5-amino-1-(5-phospho-D-ribosyl)imidazole-4-carboxamide (10-formyl THF route): step 1/1. It participates in purine metabolism; IMP biosynthesis via de novo pathway; IMP from 5-formamido-1-(5-phospho-D-ribosyl)imidazole-4-carboxamide: step 1/1. In Herminiimonas arsenicoxydans, this protein is Bifunctional purine biosynthesis protein PurH.